We begin with the raw amino-acid sequence, 205 residues long: Colicin-E8 (205 aa).

Disordered regions lie at residues 24 to 109 (AQTD…PDRI) and 136 to 187 (PELS…VYDM). Composition is skewed to basic and acidic residues over residues 53-76 (QERR…ESKR), 88-99 (PVGDKWLDDAGK), and 159-178 (RNKD…DKPI). Residues histidine 173, histidine 198, and histidine 202 each coordinate Zn(2+).

Belongs to the colicin/pyosin nuclease family.

Functionally, this plasmid-coded bactericidal protein is an endonuclease active on both single- and double-stranded DNA but with undefined specificity. In terms of biological role, colicins are polypeptide toxins produced by and active against E.coli and closely related bacteria. The sequence is that of Colicin-E8 (col) from Escherichia coli.